An 860-amino-acid chain; its full sequence is Ras GTPase-activating-like protein gapA (860 aa).

Acidic residues predominate over residues 1 to 20; sequence MEGLEIEDEDVILLDEDDDS. Positions 1–48 are disordered; it reads MEGLEIEDEDVILLDEDDDSSSSSTVNNSSSNIKNNGNTNNNIGNDDS. A compositionally biased stretch (low complexity) spans 21–46; sequence SSSSTVNNSSSNIKNNGNTNNNIGND. A coiled-coil region spans residues 146 to 185; the sequence is AEIQELKRNMVAEIRRNHLLERDVNKLDKRIALLIKHRSN. In terms of domain architecture, Ras-GAP spans 269–515; it reads FLILSLFRLA…SIVRQYLEDL (247 aa). A coiled-coil region spans residues 663–732; that stretch reads NNPQLSSNAE…TIALRDLRKH (70 aa).

Heterotetramer. Quaternary complex with activated rac1A, ctxA and ctxB in the absence of rgaA.

Its function is as follows. Part of signaling pathway that is required for completion of cytokinesis. gapA and rgaA control cortexillin localization to the cleavage furrow and hence may be involved in cleavage of the midbody in the final stage of cytokinesis by regulating the actin cytoskeleton. Forms a complex by linking activated rac1A to ctxA in the absence of rgaA. Assembly of this complex is necessary for the recruitment of cortexillin to the midzone of the dividing cell. This is Ras GTPase-activating-like protein gapA (gapA) from Dictyostelium discoideum (Social amoeba).